An 831-amino-acid polypeptide reads, in one-letter code: Probable beta-glucosidase H (831 aa).

A glycan (N-linked (GlcNAc...) asparagine) is linked at N13. D225 is an active-site residue. One can recognise a PA14 domain in the interval 389–549 (RLLSNAVIHF…DAEEMINRAV (161 aa)). 6 N-linked (GlcNAc...) asparagine glycosylation sites follow: N474, N514, N604, N629, N726, and N823.

The protein belongs to the glycosyl hydrolase 3 family.

Its subcellular location is the secreted. It catalyses the reaction Hydrolysis of terminal, non-reducing beta-D-glucosyl residues with release of beta-D-glucose.. It participates in glycan metabolism; cellulose degradation. In terms of biological role, beta-glucosidases are one of a number of cellulolytic enzymes involved in the degradation of cellulosic biomass. Catalyzes the last step releasing glucose from the inhibitory cellobiose. The polypeptide is Probable beta-glucosidase H (bglH) (Emericella nidulans (strain FGSC A4 / ATCC 38163 / CBS 112.46 / NRRL 194 / M139) (Aspergillus nidulans)).